Reading from the N-terminus, the 215-residue chain is MSKVYDWFEERLEIQAIADDITSKYVPPHVNIFYCLGGITLTCFLVQVATGFAMTFYYRPTVTEAFASVQYIMTEANFGWLIRSVHRWSASMMVLMMILHVFRVYLTGGFKKPRELTWVTGVVLAVLTASFGVTGYSLPWDQIGYWAVKIVTGVPDAIPVIGSPLVELLRGSASVGQSTLTRFYSLHTFVLPLLTAVFMLMHFLMIRKQGISGPL.

The helical transmembrane segment at 32–52 (IFYCLGGITLTCFLVQVATGF) threads the bilayer. Heme c is bound at residue cysteine 35. Heme b is bound by residues histidine 86 and histidine 100. 3 helical membrane-spanning segments follow: residues 90–110 (ASMMVLMMILHVFRVYLTGGF), 116–136 (LTWVTGVVLAVLTASFGVTGY), and 186–206 (LHTFVLPLLTAVFMLMHFLMI). Residues histidine 187 and histidine 202 each coordinate heme b.

The protein belongs to the cytochrome b family. PetB subfamily. In terms of assembly, the 4 large subunits of the cytochrome b6-f complex are cytochrome b6, subunit IV (17 kDa polypeptide, PetD), cytochrome f and the Rieske protein, while the 4 small subunits are PetG, PetL, PetM and PetN. The complex functions as a dimer. Heme b is required as a cofactor. It depends on heme c as a cofactor.

Its subcellular location is the plastid. It is found in the chloroplast thylakoid membrane. Functionally, component of the cytochrome b6-f complex, which mediates electron transfer between photosystem II (PSII) and photosystem I (PSI), cyclic electron flow around PSI, and state transitions. This chain is Cytochrome b6, found in Oenothera elata subsp. hookeri (Hooker's evening primrose).